A 132-amino-acid polypeptide reads, in one-letter code: Gamma-crystallin-5 (132 aa).

Residues 1-40 form the Beta/gamma crystallin 'Greek key' 2 domain; sequence ILYEQPSYRGHQYYLWKGEYPDFQRWMGFNDSIRSCRMSP. The interval 41 to 45 is connecting peptide; it reads YHQGQ. 2 consecutive Beta/gamma crystallin 'Greek key' domains span residues 46 to 86 and 87 to 129; these read YKMR…NVFD and GNWM…RRVH.

Belongs to the beta/gamma-crystallin family. In terms of assembly, monomer.

In terms of biological role, crystallins are the dominant structural components of the vertebrate eye lens. The polypeptide is Gamma-crystallin-5 (cryg5) (Xenopus laevis (African clawed frog)).